The sequence spans 359 residues: sn-1 acyl-lipid omega-3 desaturase (ferredoxin) (359 aa).

2 helical membrane passes run 44–64 (LGYF…AAYL) and 67–87 (WFFY…LFVV). Residues 89-93 (HDCGH) carry the Histidine box-1 motif. The Histidine box-2 motif lies at 125–129 (HRTHH). 3 helical membrane-spanning segments follow: residues 153-173 (AWYE…IYLF), 206-226 (LAAF…LFLL), and 228-248 (FYVA…FLHH). A Histidine box-3 motif is present at residues 291–295 (HHIFS).

It belongs to the fatty acid desaturase type 2 family. It depends on Fe(2+) as a cofactor.

It localises to the membrane. The enzyme catalyses a 1-[(9Z,12Z)-octadecdienoyl]-2-acyl-glycerolipid + 2 reduced [2Fe-2S]-[ferredoxin] + O2 + 2 H(+) = a 1-[(9Z,12Z,15Z)-octadectrienoyl]-2-acyl-glycerolipid + 2 oxidized [2Fe-2S]-[ferredoxin] + 2 H2O. It catalyses the reaction a 1-[(6Z,9Z,12Z)-octadectrienoyl]-2-acyl-glycerolipid + 2 reduced [2Fe-2S]-[ferredoxin] + O2 + 2 H(+) = a 1-[(6Z,9Z,12Z,15Z)-octadectetraenoyl]-2-acyl-glycerolipid + 2 oxidized [2Fe-2S]-[ferredoxin] + 2 H2O. It participates in lipid metabolism; polyunsaturated fatty acid biosynthesis. Its function is as follows. Desaturase involved in fatty acid biosynthesis. Introduces a double bond at carbon 15 of linoleoyl and gamma-linolenoyl groups attached to the sn-1 position of the glycerol moiety of membrane glycerolipids. The sequence is that of sn-1 acyl-lipid omega-3 desaturase (ferredoxin) from Synechocystis sp. (strain ATCC 27184 / PCC 6803 / Kazusa).